Consider the following 87-residue polypeptide: Small ribosomal subunit protein uS15c (87 aa).

The protein belongs to the universal ribosomal protein uS15 family. As to quaternary structure, part of the 30S ribosomal subunit.

The protein localises to the plastid. It localises to the chloroplast. The chain is Small ribosomal subunit protein uS15c (rps15) from Atropa belladonna (Belladonna).